A 62-amino-acid chain; its full sequence is Rubredoxin-2 (62 aa).

The region spanning Met7 to Leu58 is the Rubredoxin-like domain. Fe cation-binding residues include Cys10, Cys15, Cys45, and Cys48.

It belongs to the rubredoxin family. Monomer. The cofactor is Fe(3+).

Functionally, rubredoxin is a small nonheme, iron protein lacking acid-labile sulfide. Its single Fe, chelated to 4 Cys, functions as an electron acceptor and may also stabilize the conformation of the molecule. The chain is Rubredoxin-2 (rd2) from Desulfovibrio desulfuricans (strain ATCC 27774 / DSM 6949 / MB).